Consider the following 319-residue polypeptide: Ribosomal RNA small subunit methyltransferase H (319 aa).

S-adenosyl-L-methionine-binding positions include 39-41, D59, F83, D104, and Q111; that span reads GGH.

Belongs to the methyltransferase superfamily. RsmH family.

The protein resides in the cytoplasm. It carries out the reaction cytidine(1402) in 16S rRNA + S-adenosyl-L-methionine = N(4)-methylcytidine(1402) in 16S rRNA + S-adenosyl-L-homocysteine + H(+). Its function is as follows. Specifically methylates the N4 position of cytidine in position 1402 (C1402) of 16S rRNA. This chain is Ribosomal RNA small subunit methyltransferase H, found in Ralstonia pickettii (strain 12J).